A 709-amino-acid polypeptide reads, in one-letter code: Polyribonucleotide nucleotidyltransferase (709 aa).

Residues Asp-489 and Asp-495 each contribute to the Mg(2+) site. One can recognise a KH domain in the interval 556–615; sequence PKIDMIKIDVDKIKVVIGKGGETIDKIIAETGVKIDIDEEGNVSIFSSDQAAIDRTKDII. An S1 motif domain is found at 625–693; sequence GEVYHAKVVR…DKGRVDASMK (69 aa).

The protein belongs to the polyribonucleotide nucleotidyltransferase family. The cofactor is Mg(2+).

It is found in the cytoplasm. The catalysed reaction is RNA(n+1) + phosphate = RNA(n) + a ribonucleoside 5'-diphosphate. Its function is as follows. Involved in mRNA degradation. Catalyzes the phosphorolysis of single-stranded polyribonucleotides processively in the 3'- to 5'-direction. The chain is Polyribonucleotide nucleotidyltransferase from Streptococcus agalactiae serotype III (strain NEM316).